We begin with the raw amino-acid sequence, 113 residues long: ATP-dependent Clp protease adapter protein ClpS (113 aa).

This sequence belongs to the ClpS family. In terms of assembly, binds to the N-terminal domain of the chaperone ClpA.

Functionally, involved in the modulation of the specificity of the ClpAP-mediated ATP-dependent protein degradation. This Leptospira biflexa serovar Patoc (strain Patoc 1 / Ames) protein is ATP-dependent Clp protease adapter protein ClpS.